The sequence spans 328 residues: D-cysteine desulfhydrase (328 aa).

Lysine 51 is modified (N6-(pyridoxal phosphate)lysine).

The protein belongs to the ACC deaminase/D-cysteine desulfhydrase family. As to quaternary structure, homodimer. It depends on pyridoxal 5'-phosphate as a cofactor.

The enzyme catalyses D-cysteine + H2O = hydrogen sulfide + pyruvate + NH4(+) + H(+). In terms of biological role, catalyzes the alpha,beta-elimination reaction of D-cysteine and of several D-cysteine derivatives. It could be a defense mechanism against D-cysteine. This Klebsiella pneumoniae (strain 342) protein is D-cysteine desulfhydrase.